The primary structure comprises 433 residues: Indole diterpene prenyltransferase terF (433 aa).

The protein belongs to the tryptophan dimethylallyltransferase family.

Its pathway is secondary metabolite biosynthesis. Functionally, indole diterpene prenyltransferase; part of the gene cluster that mediates the biosynthesis of terpendoles, indole-diterpene (IDT) mycotoxins including terpendole I, terpendole K, terpendole C, as well as the kinesin Eg5 inhibitor terpendole E. Terpendoles biosynthesis begins with the synthesis of geranylgeranyl diphosphate (GGPP) by a yet unidentified GGPP synthase. Condensation of indole-3-glycerol phosphate with GGPP by the prenyltransferase terC then forms 3-geranylgeranylindole (3-GGI), followed by epoxidation and cyclization of this intermediate (by the FAD-dependent monooxygeanse terM and the terpene cyclase terB) to form paspaline. The cytochrome monooxygenase terQ then hydroxylates paspalline at C-11 to yield terpendole E. The cytochrome monooxygenase terP converts terpendole E to 13-desoxyterpendole I, and terQ converts 13-desoxyterpendole I into terpendole I. TerF and terK are required for conversion of terpendole I to terpendole C which is further converted to terpendole K. The chain is Indole diterpene prenyltransferase terF from Tolypocladium album (Soil fungus).